We begin with the raw amino-acid sequence, 295 residues long: MVRTPCCKEEGIKKGAWTPEEDQKLIAYLHLHGEGGWRTLPEKAGLKRCGKSCRLRWANYLRPDIKRGEFSPEEDDTIIKLHALKGNKWAAIATSLAGRTDNEIKNYWNTNLKKRLKQKGIDAITHKPINSTGQTGFEPKVNKPVYSSGSARLLNRVASKYAVELNRDLLTGIISGNSTVAEDSQNSGDVDSPTSTLLNKMAATSVLINTTTTYSGFSDNCSFTDEFNEFFNNEEISDIYTTVDNFGFMEELKSILSYGDASAGVIENSPEVNVADAMEFIDSWNEDDNMVGVFV.

HTH myb-type domains lie at 9 to 61 and 62 to 116; these read EEGI…ANYL and RPDI…KKRL. DNA-binding regions (H-T-H motif) lie at residues 37 to 61 and 89 to 112; these read WRTL…ANYL and WAAI…NTNL.

In terms of assembly, can form complexes with MYC2, MYC3 or MYC4. In terms of tissue distribution, expressed in trichomes.

It is found in the nucleus. Its function is as follows. Transcription factor involved in tryptophan gene activation and in indole-3-acetic acid (IAA) and indolic glucosinolates (IG) biosynthesis. Acts as a direct transcriptional activator of both Trp synthesis genes and Trp secondary metabolism genes. The sequence is that of Transcription factor MYB34 (MYB34) from Arabidopsis thaliana (Mouse-ear cress).